The primary structure comprises 394 residues: 1-deoxy-D-xylulose 5-phosphate reductoisomerase (394 aa).

NADPH-binding residues include threonine 13, glycine 14, threonine 15, isoleucine 16, and asparagine 125. Lysine 126 lines the 1-deoxy-D-xylulose 5-phosphate pocket. Glutamate 127 serves as a coordination point for NADPH. A Mn(2+)-binding site is contributed by aspartate 151. Residues serine 152, glutamate 153, serine 182, and histidine 205 each coordinate 1-deoxy-D-xylulose 5-phosphate. Glutamate 153 contributes to the Mn(2+) binding site. Glycine 211 lines the NADPH pocket. The 1-deoxy-D-xylulose 5-phosphate site is built by serine 218, asparagine 223, lysine 224, and glutamate 227. Glutamate 227 contacts Mn(2+).

Belongs to the DXR family. It depends on Mg(2+) as a cofactor. Mn(2+) is required as a cofactor.

The enzyme catalyses 2-C-methyl-D-erythritol 4-phosphate + NADP(+) = 1-deoxy-D-xylulose 5-phosphate + NADPH + H(+). It functions in the pathway isoprenoid biosynthesis; isopentenyl diphosphate biosynthesis via DXP pathway; isopentenyl diphosphate from 1-deoxy-D-xylulose 5-phosphate: step 1/6. Functionally, catalyzes the NADPH-dependent rearrangement and reduction of 1-deoxy-D-xylulose-5-phosphate (DXP) to 2-C-methyl-D-erythritol 4-phosphate (MEP). The chain is 1-deoxy-D-xylulose 5-phosphate reductoisomerase from Methylobacillus flagellatus (strain ATCC 51484 / DSM 6875 / VKM B-1610 / KT).